The chain runs to 229 residues: Small ribosomal subunit protein uS3 (229 aa).

Residues 18–87 (IDEYLAKQYY…NPQITITNVE (70 aa)) form the KH type-2 domain.

The protein belongs to the universal ribosomal protein uS3 family. In terms of assembly, part of the 30S ribosomal subunit.

In terms of biological role, binds the lower part of the 30S subunit head. The chain is Small ribosomal subunit protein uS3 from Saccharolobus solfataricus (strain ATCC 35092 / DSM 1617 / JCM 11322 / P2) (Sulfolobus solfataricus).